The following is a 317-amino-acid chain: Protoheme IX farnesyltransferase (317 aa).

A run of 9 helical transmembrane segments spans residues 39 to 58 (VMSL…PGSL), 62 to 84 (LGAI…NMWY), 100 to 120 (IPAG…LAVG), 123 to 143 (LVMW…AIFF), 160 to 180 (IVIG…AVTG), 184 to 204 (LMPV…FWSL), 233 to 253 (IMAY…LGDT), 256 to 276 (VYGL…WRVL), and 293 to 313 (ARAA…ALAV).

Belongs to the UbiA prenyltransferase family. Protoheme IX farnesyltransferase subfamily.

The protein resides in the cell inner membrane. The enzyme catalyses heme b + (2E,6E)-farnesyl diphosphate + H2O = Fe(II)-heme o + diphosphate. Its pathway is porphyrin-containing compound metabolism; heme O biosynthesis; heme O from protoheme: step 1/1. Functionally, converts heme B (protoheme IX) to heme O by substitution of the vinyl group on carbon 2 of heme B porphyrin ring with a hydroxyethyl farnesyl side group. This Granulibacter bethesdensis (strain ATCC BAA-1260 / CGDNIH1) protein is Protoheme IX farnesyltransferase.